The sequence spans 348 residues: Dihydroorotase (348 aa).

Zn(2+) contacts are provided by His17 and His19. Residues 19–21 and Asn45 contribute to the substrate site; that span reads HLR. Zn(2+)-binding residues include Lys103, His140, and His178. N6-carboxylysine is present on Lys103. His140 provides a ligand contact to substrate. Leu223 contributes to the substrate binding site. Asp251 contributes to the Zn(2+) binding site. The active site involves Asp251. Substrate contacts are provided by His255 and Ala267.

Belongs to the metallo-dependent hydrolases superfamily. DHOase family. Class II DHOase subfamily. Homodimer. Zn(2+) is required as a cofactor.

It carries out the reaction (S)-dihydroorotate + H2O = N-carbamoyl-L-aspartate + H(+). It functions in the pathway pyrimidine metabolism; UMP biosynthesis via de novo pathway; (S)-dihydroorotate from bicarbonate: step 3/3. Functionally, catalyzes the reversible cyclization of carbamoyl aspartate to dihydroorotate. The sequence is that of Dihydroorotase from Edwardsiella ictaluri (strain 93-146).